Reading from the N-terminus, the 358-residue chain is MAQVGSAGPGACGRRGAGAGAGPERTTWRWAPALLWLATAAAVAGDPSRRQWPVPYKRFSFRPEPDPYCQAKYTFCPTGSPIPVMKDDDVIEVFRLQAPVWEFKYGDLLGHLKIMHDAIGFRSTLTEKNYTMEWYELFQLGNCTFPHLRPEMNAPFWCNQGAACFFEGIDDSHWKENGTLVLVATISGGMFNRMAKWVKQDNETGIYYETWTVQASPERGAERWFESYDCSKFVLRTYEKLAELGADFKKIETNYTRIFLYSGEPTYLGNETSVFGPTGNKTLALAIKKFYYPFKPHLSTKEFLLSLLQIFDAVVIHREFYLFYNFEYWFLPMKYPFIKITYEEIPLPNRKNRTLSGL.

The interval 1–23 (MAQVGSAGPGACGRRGAGAGAGP) is disordered. At 1 to 29 (MAQVGSAGPGACGRRGAGAGAGPERTTWR) the chain is on the cytoplasmic side. Positions 7 to 21 (AGPGACGRRGAGAGA) are enriched in gly residues. Residues 30–46 (WAPALLWLATAAAVAGD) traverse the membrane as a helical; Signal-anchor for type II membrane protein segment. The Lumenal portion of the chain corresponds to 47-358 (PSRRQWPVPY…NRKNRTLSGL (312 aa)). 2 disulfides stabilise this stretch: Cys-69–Cys-158 and Cys-76–Cys-164. Catalysis depends on His-116, which acts as the Proton acceptor. Asn-129, Asn-142, Asn-177, and Asn-202 each carry an N-linked (GlcNAc...) asparagine glycan. The active-site Nucleophile; Acyl-thioester intermediate is Cys-230. Residues Asn-254, Asn-270, and Asn-280 are each glycosylated (N-linked (GlcNAc...) asparagine). The tract at residues 303 to 342 (FLLSLLQIFDAVVIHREFYLFYNFEYWFLPMKYPFIKITY) is membrane-anchoring. An N-linked (GlcNAc...) asparagine glycan is attached at Asn-352.

The protein belongs to the CLN5 family. Multimer. Interacts with SORT1, RAB5A and RAB7A. Interacts with PPT1, TPP1, CLN3, CLN6, CLN8, ATP5F1A and ATP5F1B. N-glycosylated with both high mannose and complex type sugars. Glycosylation is important for proper folding and trafficking to the lysosomes. In terms of processing, the type II membrane signal anchor is proteolytically cleaved to produce a mature form that is transported to the lysosomes (Bis(monoacylglycero)phosphate synthase CLN5, secreted form). Post-translationally, can undergo proteolytic cleavage at the C-terminus, probably by a cysteine protease and may involve the removal of approximately 10-15 residues from the C-terminal end.

Its subcellular location is the lysosome. The protein localises to the membrane. The catalysed reaction is S-hexadecanoyl-L-cysteinyl-[protein] + H2O = L-cysteinyl-[protein] + hexadecanoate + H(+). It carries out the reaction 2 1-acyl-sn-glycero-3-phospho-(1'-sn-glycerol) = 1-acyl-sn-glycero-3-phospho-(3'-acyl-sn-1'-glycerol) + sn-glycero-3-phospho-(1'-sn-glycerol). It catalyses the reaction 2 1-(9Z-octadecenoyl)-sn-glycero-3-phospho-(1'-sn-glycerol) = 1-(9Z-octadecenoyl)-sn-glycero-3-phospho-(3'-(9Z-octadecenoyl)-1'-sn-glycerol) + sn-glycero-3-phospho-(1'-sn-glycerol). The enzyme catalyses 2 1-octadecanoyl-sn-glycero-3-phospho-(1'-sn-glycerol) = 1-octadecanoyl-sn-glycero-3-phospho-(3'-octadecanoyl-1'-sn-glycerol) + sn-glycero-3-phospho-(1'-sn-glycerol). The catalysed reaction is 2 1-hexadecanoyl-sn-glycero-3-phospho-(1'-sn-glycerol) = 1-hexadecanoyl-sn-glycero-3-phospho-(3'-hexadecanoyl-1'-sn-glycerol) + sn-glycero-3-phospho-(1'-sn-glycerol). It carries out the reaction 2 1-tetradecanoyl-sn-glycero-3-phospho-(1'-sn-glycerol) = 1-tetradecanoyl-sn-glycero-3-phospho-(3'-tetradecanoyl-1'-sn-glycerol) + sn-glycero-3-phospho-(1'-sn-glycerol). Its function is as follows. Catalyzes the synthesis of bis(monoacylglycero)phosphate (BMP) via transacylation of 2 molecules of lysophosphatidylglycerol (LPG). BMP also known as lysobisphosphatidic acid plays a key role in the formation of intraluminal vesicles and in maintaining intracellular cholesterol homeostasis. Can use only LPG as the exclusive lysophospholipid acyl donor for base exchange and displays BMP synthase activity towards various LPGs (LPG 14:0, LPG 16:0, LPG 18:0, LPG 18:1) with a higher preference for longer chain lengths. Plays a role in influencing the retrograde trafficking of lysosomal sorting receptors SORT1 and IGF2R from the endosomes to the trans-Golgi network by controlling the recruitment of retromer complex to the endosomal membrane. Regulates the localization and activation of RAB7A which is required to recruit the retromer complex to the endosomal membrane. Exhibits palmitoyl protein thioesterase (S-depalmitoylation) activity in vitro and most likely plays a role in protein S-depalmitoylation. The sequence is that of Bis(monoacylglycero)phosphate synthase CLN5 (CLN5) from Bos taurus (Bovine).